We begin with the raw amino-acid sequence, 320 residues long: tRNA (guanosine(34)-2'-O)-methyltransferase (320 aa).

The S-adenosyl-L-methionine site is built by Gly-53, Trp-55, Asp-81, Asp-97, and Asp-122. The Proton acceptor role is filled by Lys-162.

This sequence belongs to the class I-like SAM-binding methyltransferase superfamily. RNA methyltransferase RlmE family. TRM7 subfamily. Interacts with CG33172/WDR6.

Its subcellular location is the cytoplasm. It carries out the reaction cytidine(32)/guanosine(34) in tRNA + 2 S-adenosyl-L-methionine = 2'-O-methylcytidine(32)/2'-O-methylguanosine(34) in tRNA + 2 S-adenosyl-L-homocysteine + 2 H(+). In terms of biological role, methylates the 2'-O-ribose of nucleotides at position 34 of the tRNA anticodon loop of substrate tRNAs. May require WDR6 for methylation of the nucleotide at position 34 of the anticodon loop of substrate tRNAs. Plays a role in neurogenesis. Requisite for RNA-mediated gene silencing. Modifies position 34 in tRNA(Leu(CAA)), tRNA(Leu(CAG)), tRNA(Phe(GAA)), and tRNA(Trp(CCA)). The protein is tRNA (guanosine(34)-2'-O)-methyltransferase of Drosophila melanogaster (Fruit fly).